We begin with the raw amino-acid sequence, 1295 residues long: Phosphoribosylformylglycinamidine synthase (1295 aa).

Positions 305-327 (WPGAATGSGGEIRDEGATGRGAK) are disordered. ATP-binding positions include 307–318 (GAATGSGGEIRD), 386–388 (TGY), and Ala-678. Asp-679, Glu-718, Asn-722, and Asp-884 together coordinate Mg(2+). Ser-886 is a binding site for ATP. The 254-residue stretch at 1042–1295 (VAVLREQGVN…IFRNARKQLG (254 aa)) folds into the Glutamine amidotransferase type-1 domain. Catalysis depends on Cys-1135, which acts as the Nucleophile. Residues His-1260 and Glu-1262 contribute to the active site.

It in the N-terminal section; belongs to the FGAMS family. In terms of assembly, monomer.

Its subcellular location is the cytoplasm. The catalysed reaction is N(2)-formyl-N(1)-(5-phospho-beta-D-ribosyl)glycinamide + L-glutamine + ATP + H2O = 2-formamido-N(1)-(5-O-phospho-beta-D-ribosyl)acetamidine + L-glutamate + ADP + phosphate + H(+). The protein operates within purine metabolism; IMP biosynthesis via de novo pathway; 5-amino-1-(5-phospho-D-ribosyl)imidazole from N(2)-formyl-N(1)-(5-phospho-D-ribosyl)glycinamide: step 1/2. Its function is as follows. Phosphoribosylformylglycinamidine synthase involved in the purines biosynthetic pathway. Catalyzes the ATP-dependent conversion of formylglycinamide ribonucleotide (FGAR) and glutamine to yield formylglycinamidine ribonucleotide (FGAM) and glutamate. The sequence is that of Phosphoribosylformylglycinamidine synthase from Salmonella paratyphi A (strain ATCC 9150 / SARB42).